The primary structure comprises 272 residues: Potassium channel regulatory protein (272 aa).

Residues 5-106 (ELVTLNVGGK…LLNPYLLQPR (102 aa)) form the BTB domain.

Can form homooligomers. Interacts with KCNA1 (via cytoplasmic N-terminal domain) and KCNA4. In terms of tissue distribution, ubiquitous in normal tissues and expressed in some tumor tissues.

It localises to the endoplasmic reticulum. Functionally, inhibits potassium fluxes in cells. May regulate Kv1 family channel proteins by retaining a fraction of channels in endomembranes. This chain is Potassium channel regulatory protein (KCNRG), found in Homo sapiens (Human).